The following is a 190-amino-acid chain: FMRFamide-related peptides (190 aa).

Positions M1–S21 are cleaved as a signal peptide. Residues S22 to R33 constitute a propeptide that is removed on maturation. At F45 the chain carries Phenylalanine amide. The propeptide occupies G69–T104. The residue at position 113 (F113) is a Phenylalanine amide. Residues D116 to R150 constitute a propeptide that is removed on maturation. L158 is subject to Leucine amide. Residues R160 to S190 constitute a propeptide that is removed on maturation. The segment at D161–S190 is disordered. Residues E164–E174 are compositionally biased toward acidic residues. Positions E175–S190 are enriched in basic and acidic residues.

The protein belongs to the FARP (FMRFamide related peptide) family. As to expression, RFamide 1: Expressed in corpora cardiaca (CC), corpora allata (CA), antennal lobe (AL) and gnathal ganglion (GNG) (at protein level). Expression in AL detected in most animals, in CC, CA and in GNG in some animals (at protein level). RFamide precursor-related peptide 2: Expressed in corpora cardiaca (CC), corpora allata (CA), antennal lobe (AL) and gnathal ganglion (GNG) (at protein level). Expression in AL detected in some animals, expression in CC, CA and GNG in few animals (at protein level). RFamide 3: Expressed in corpora cardiaca (CC), corpora allata (CA), antennal lobe (AL) and gnathal ganglion (GNG) (at protein level). Expression in AL detected in all animals, in CC, CA and GNG in most animals (at protein level). RFamide 5: Expressed in corpora cardiaca (CC), corpora allata (CA), antennal lobe (AL) and gnathal ganglion (GNG) (at protein level). Expression in AL detected in all animals, in CC, CA and in GNG in some animals (at protein level).

The protein resides in the secreted. Its function is as follows. In insects, FMRFamide and related peptides have modulatory actions at skeletal neuromuscular junctions, and peptides that are immunologically related to FMRFamide are released into the circulation from neurohemal organs. The polypeptide is FMRFamide-related peptides (Agrotis ipsilon (Black cutworm moth)).